The chain runs to 582 residues: Calcium-dependent protein kinase 24 (582 aa).

Residues 1–36 (MGSCVSSPLKGSPFGKRPVRRRHSSNSRTSSVPRFD) form a disordered region. The N-myristoyl glycine moiety is linked to residue Gly-2. Residues 66–324 (YDLGKELGRG…VQEVLEHPWI (259 aa)) form the Protein kinase domain. ATP-binding positions include 72–80 (LGRGEFGVT) and Lys-95. Residue Asp-190 is the Proton acceptor of the active site. At Ser-230 the chain carries Phosphoserine. The autoinhibitory domain stretch occupies residues 330–360 (APNVNLGDNVRTKIQQFLLMNRFKKKVLRIV). 4 consecutive EF-hand domains span residues 367–402 (EEIAAIVQMFQTMDTDKNGHLTFEELRDGLKKIGQV), 403–438 (VPDGDVKMLMDAADTDGNGMLSCDEFVTLSIHLKRM), 439–474 (GCDEHLQEAFKYFDKNGNGFIELDELKVALCDDKLG), and 478–513 (GNDQWIKDIFFDVDLNKDGRISFDEFKAMMKSGTDW). Positions 380, 382, 384, 386, 391, 416, 418, 420, 422, 427, 452, 454, 456, 463, 491, 493, 495, and 497 each coordinate Ca(2+). Ser-499 carries the post-translational modification Phosphoserine. Glu-502 is a binding site for Ca(2+).

This sequence belongs to the protein kinase superfamily. Ser/Thr protein kinase family. CDPK subfamily.

Its subcellular location is the membrane. The enzyme catalyses L-seryl-[protein] + ATP = O-phospho-L-seryl-[protein] + ADP + H(+). It carries out the reaction L-threonyl-[protein] + ATP = O-phospho-L-threonyl-[protein] + ADP + H(+). With respect to regulation, activated by calcium. Autophosphorylation may play an important role in the regulation of the kinase activity. Functionally, may play a role in signal transduction pathways that involve calcium as a second messenger. In Arabidopsis thaliana (Mouse-ear cress), this protein is Calcium-dependent protein kinase 24 (CPK24).